Consider the following 148-residue polypeptide: Early glycoprotein GP48 (148 aa).

An N-terminal signal peptide occupies residues 1–21; it reads MMLRAWRLMVLLAAYCYYVFA. N-linked (GlcNAc...) asparagine; by host glycosylation is found at Asn22, Asn44, Asn49, Asn57, Asn65, Asn104, Asn108, Asn118, Asn135, and Asn144.

The protein belongs to the RL11 family. In terms of processing, N-glycosylated and possibly O-glycosylated.

The protein localises to the virion membrane. This is Early glycoprotein GP48 (UL4) from Homo sapiens (Human).